A 441-amino-acid chain; its full sequence is Ribulose bisphosphate carboxylase (441 aa).

The active-site Proton acceptor is the Lys-160. Lys-162 provides a ligand contact to substrate. Residues Lys-186, Asp-188, and Glu-189 each contribute to the Mg(2+) site. Lys-186 is modified (N6-carboxylysine). His-278 (proton acceptor) is an active-site residue. Residues Arg-279, His-311, 364–366, and 386–389 contribute to the substrate site; these read SGG and QVGG.

Belongs to the RuBisCO large chain family. Type III subfamily. As to quaternary structure, homodimer. In contrast to form I RuBisCO, the form III RuBisCO is composed solely of large subunits. Mg(2+) serves as cofactor.

The enzyme catalyses 2 (2R)-3-phosphoglycerate + 2 H(+) = D-ribulose 1,5-bisphosphate + CO2 + H2O. It catalyses the reaction D-ribulose 1,5-bisphosphate + O2 = 2-phosphoglycolate + (2R)-3-phosphoglycerate + 2 H(+). Reversibly inhibited by O(2). Its function is as follows. Catalyzes the addition of molecular CO(2) and H(2)O to ribulose 1,5-bisphosphate (RuBP), generating two molecules of 3-phosphoglycerate (3-PGA). Functions in an archaeal AMP degradation pathway, together with AMP phosphorylase and R15P isomerase. This Archaeoglobus fulgidus (strain ATCC 49558 / DSM 4304 / JCM 9628 / NBRC 100126 / VC-16) protein is Ribulose bisphosphate carboxylase.